We begin with the raw amino-acid sequence, 444 residues long: Transcriptional coactivator nsrH (444 aa).

The HTH iclR-type domain occupies 74–144 (ASQVSEILAC…ERDHVAHTPL (71 aa)). The segment at residues 104–123 (IKDIADLTNVPESRLRRIIR) is a DNA-binding region (H-T-H motif).

The protein resides in the nucleus. In terms of biological role, transcriptional coactivator; part of the gene cluster that mediates the biosynthesis of the tetrahydroxanthone dimer neosartorin, which exhibits antibacterial activity. This is Transcriptional coactivator nsrH from Aspergillus novofumigatus (strain IBT 16806).